The following is a 540-amino-acid chain: Chaperonin GroEL (540 aa).

ATP-binding positions include 29 to 32, 86 to 90, G413, 476 to 478, and D492; these read TLGP, DGTTT, and NAA.

Belongs to the chaperonin (HSP60) family. Forms a cylinder of 14 subunits composed of two heptameric rings stacked back-to-back. Interacts with the co-chaperonin GroES.

The protein resides in the cytoplasm. The enzyme catalyses ATP + H2O + a folded polypeptide = ADP + phosphate + an unfolded polypeptide.. In terms of biological role, together with its co-chaperonin GroES, plays an essential role in assisting protein folding. The GroEL-GroES system forms a nano-cage that allows encapsulation of the non-native substrate proteins and provides a physical environment optimized to promote and accelerate protein folding. The chain is Chaperonin GroEL from Streptococcus pneumoniae (strain Hungary19A-6).